A 200-amino-acid chain; its full sequence is MKWLGNVLVSPGEGGVYGERTLDGYRVWDPYRSKLAALYTLGGGVELTPEMRVLYLGAANGTTVSHVADYVETVYAVEFAPRPMQDLLEVARRRRNIVPIMADASRPEEYAPFMEAVDLVYQDVAQPNQVEIAERNLVFLKPGGHLVLMLKTRSVDVRRDPAEVLAGARTGLEERLDIADVRWLDPYHHDHAAIVCSRRE.

Residues Thr-62 to Thr-63, Glu-78 to Phe-79, Asp-103 to Ala-104, and Asp-123 to Gln-126 each bind S-adenosyl-L-methionine.

Belongs to the methyltransferase superfamily. Fibrillarin family. In terms of assembly, interacts with nop5. Component of box C/D small ribonucleoprotein (sRNP) particles that contain rpl7ae, FlpA and nop5, plus a guide RNA.

Its function is as follows. Involved in pre-rRNA and tRNA processing. Utilizes the methyl donor S-adenosyl-L-methionine to catalyze the site-specific 2'-hydroxyl methylation of ribose moieties in rRNA and tRNA. Site specificity is provided by a guide RNA that base pairs with the substrate. Methylation occurs at a characteristic distance from the sequence involved in base pairing with the guide RNA. The protein is Fibrillarin-like rRNA/tRNA 2'-O-methyltransferase of Methanoculleus marisnigri (strain ATCC 35101 / DSM 1498 / JR1).